The following is a 234-amino-acid chain: Fibroblast growth factor-binding protein 1 (234 aa).

A signal peptide spans 1 to 23 (MRTHGLTLLSLLLLAVPMLLVEA). Residues 25-59 (KEGRNRRGSKASADESLALGKPGKEPRSQPTNYPI) form a disordered region. Intrachain disulfides connect Cys-71-Cys-88, Cys-97-Cys-130, and Cys-106-Cys-142. The N-linked (GlcNAc...) asparagine glycan is linked to Asn-155. The interval 169–200 (MEPSPMDTVEVTTSSSPEKTQTMATKDPQCEE) is disordered. Ser-172 is a glycosylation site (O-linked (GalNAc...) serine). Over residues 178-192 (EVTTSSSPEKTQTMA) the composition is skewed to polar residues. The interval 194-234 (KDPQCEEEDLKNQRKAALEYCGETWGSLCNFFLSMVQGSSC) is sufficient for interaction with FGF2 and FGF2-induced effects. 2 cysteine pairs are disulfide-bonded: Cys-198–Cys-234 and Cys-214–Cys-222.

This sequence belongs to the fibroblast growth factor-binding protein family. Found in a complex with FGFBP1, FGF1 and FGF2. Interacts with FGF1, FGF7, FGF10, FGF22 and HSPG2. Interacts with FGF2.

The protein resides in the secreted. The protein localises to the extracellular space. It is found in the cell membrane. Functionally, acts as a carrier protein that release fibroblast-binding factors (FGFs) from the extracellular matrix (EM) storage and thus enhance the mitogenic activity of FGFs. Enhances FGF2 signaling during tissue repair, angiogenesis and in tumor growth. This Bos taurus (Bovine) protein is Fibroblast growth factor-binding protein 1 (FGFBP1).